The primary structure comprises 427 residues: Serine hydroxymethyltransferase (427 aa).

(6S)-5,6,7,8-tetrahydrofolate contacts are provided by residues Leu127 and 131-133; that span reads GHL. The residue at position 236 (Lys236) is an N6-(pyridoxal phosphate)lysine.

This sequence belongs to the SHMT family. Homodimer. Requires pyridoxal 5'-phosphate as cofactor.

It is found in the cytoplasm. It catalyses the reaction (6R)-5,10-methylene-5,6,7,8-tetrahydrofolate + glycine + H2O = (6S)-5,6,7,8-tetrahydrofolate + L-serine. It participates in one-carbon metabolism; tetrahydrofolate interconversion. Its pathway is amino-acid biosynthesis; glycine biosynthesis; glycine from L-serine: step 1/1. Functionally, catalyzes the reversible interconversion of serine and glycine with tetrahydrofolate (THF) serving as the one-carbon carrier. This reaction serves as the major source of one-carbon groups required for the biosynthesis of purines, thymidylate, methionine, and other important biomolecules. Also exhibits THF-independent aldolase activity toward beta-hydroxyamino acids, producing glycine and aldehydes, via a retro-aldol mechanism. The chain is Serine hydroxymethyltransferase from Paramagnetospirillum magneticum (strain ATCC 700264 / AMB-1) (Magnetospirillum magneticum).